Consider the following 258-residue polypeptide: Tryptophan synthase alpha chain (258 aa).

Residues E52 and D63 each act as proton acceptor in the active site.

Belongs to the TrpA family. Tetramer of two alpha and two beta chains.

It catalyses the reaction (1S,2R)-1-C-(indol-3-yl)glycerol 3-phosphate + L-serine = D-glyceraldehyde 3-phosphate + L-tryptophan + H2O. The protein operates within amino-acid biosynthesis; L-tryptophan biosynthesis; L-tryptophan from chorismate: step 5/5. The alpha subunit is responsible for the aldol cleavage of indoleglycerol phosphate to indole and glyceraldehyde 3-phosphate. The polypeptide is Tryptophan synthase alpha chain (Streptococcus pneumoniae (strain JJA)).